A 542-amino-acid chain; its full sequence is ATP synthase subunit beta (542 aa).

A compositionally biased stretch (low complexity) spans 1–50 (MAKTPAKAPAAAAKPAAVKKPAAPKAAAAPKAAAVATPAAKKPAAPKAAP). The tract at residues 1–61 (MAKTPAKAPA…SKVAGTREKP (61 aa)) is disordered. 216–223 (GGAGVGKT) contacts ATP.

Belongs to the ATPase alpha/beta chains family. In terms of assembly, F-type ATPases have 2 components, CF(1) - the catalytic core - and CF(0) - the membrane proton channel. CF(1) has five subunits: alpha(3), beta(3), gamma(1), delta(1), epsilon(1). CF(0) has three main subunits: a(1), b(2) and c(9-12). The alpha and beta chains form an alternating ring which encloses part of the gamma chain. CF(1) is attached to CF(0) by a central stalk formed by the gamma and epsilon chains, while a peripheral stalk is formed by the delta and b chains.

The protein localises to the cell inner membrane. It carries out the reaction ATP + H2O + 4 H(+)(in) = ADP + phosphate + 5 H(+)(out). Its function is as follows. Produces ATP from ADP in the presence of a proton gradient across the membrane. The catalytic sites are hosted primarily by the beta subunits. The chain is ATP synthase subunit beta from Caulobacter sp. (strain K31).